The primary structure comprises 102 residues: Large ribosomal subunit protein bL21 (102 aa).

It belongs to the bacterial ribosomal protein bL21 family. As to quaternary structure, part of the 50S ribosomal subunit. Contacts protein L20.

This protein binds to 23S rRNA in the presence of protein L20. This Lachnospira eligens (strain ATCC 27750 / DSM 3376 / VPI C15-48 / C15-B4) (Eubacterium eligens) protein is Large ribosomal subunit protein bL21.